The following is a 258-amino-acid chain: MAASVLNVLLRRLPYFSPFRGAYGVQVPLQTLCTKAPPEDDSLPPIPVSPYEDEPWKYLDSEEYHNRNGSRPVWADYRRNHKGGIPPQRTRKMCIRGNKVAGNPCPICRDQKLHVDFRNVKLLKQFVCAHTGIIFHAPYTGVCMKQHKKLTQAIQKARDHGLLSYHIPQVEPRDLDFSTSHGAVSATPPAPTLVSGDPWYPWYSWKQPPERELSRLRRLYQGHLREESGPPPESMPKVPLTAPNEATSTEQAGPQSAL.

A mitochondrion-targeting transit peptide spans 1 to 35; it reads MAASVLNVLLRRLPYFSPFRGAYGVQVPLQTLCTK. Residue S49 is modified to Phosphoserine. Positions 221 to 258 are disordered; that stretch reads QGHLREESGPPPESMPKVPLTAPNEATSTEQAGPQSAL. The segment covering 244–258 has biased composition (polar residues); that stretch reads NEATSTEQAGPQSAL.

This sequence belongs to the bacterial ribosomal protein bS18 family. Mitochondrion-specific ribosomal protein mS40 subfamily. As to quaternary structure, component of the mitochondrial ribosome small subunit (28S) which comprises a 12S rRNA and about 30 distinct proteins.

It localises to the mitochondrion. The chain is Small ribosomal subunit protein mS40 from Bos taurus (Bovine).